A 515-amino-acid chain; its full sequence is Integrator complex subunit 14 (515 aa).

The VWFA domain occupies 2–204 (PTVVVMDVSL…KNVQSMFGKL (203 aa)). Residues serine 10, serine 12, and threonine 86 each contribute to the Mg(2+) site. At lysine 418 the chain carries N6-acetyllysine.

Belongs to the Integrator subunit 14 family. In terms of assembly, component of the Integrator complex, composed of core subunits INTS1, INTS2, INTS3, INTS4, INTS5, INTS6, INTS7, INTS8, INTS9/RC74, INTS10, INTS11/CPSF3L, INTS12, INTS13, INTS14 and INTS15. The core complex associates with protein phosphatase 2A subunits PPP2CA and PPP2R1A, to form the Integrator-PP2A (INTAC) complex. INTS14 is part of the tail subcomplex, composed of INTS10, INTS13, INTS14 and INTS15.

The protein resides in the nucleus. Functionally, component of the integrator complex, a multiprotein complex that terminates RNA polymerase II (Pol II) transcription in the promoter-proximal region of genes. The integrator complex provides a quality checkpoint during transcription elongation by driving premature transcription termination of transcripts that are unfavorably configured for transcriptional elongation: the complex terminates transcription by (1) catalyzing dephosphorylation of the C-terminal domain (CTD) of Pol II subunit POLR2A/RPB1 and SUPT5H/SPT5, (2) degrading the exiting nascent RNA transcript via endonuclease activity and (3) promoting the release of Pol II from bound DNA. The integrator complex is also involved in terminating the synthesis of non-coding Pol II transcripts, such as enhancer RNAs (eRNAs), small nuclear RNAs (snRNAs), telomerase RNAs and long non-coding RNAs (lncRNAs). Within the integrator complex, INTS14 is part of the integrator tail module that acts as a platform for the recruitment of transcription factors at promoters. This is Integrator complex subunit 14 from Mus musculus (Mouse).